Reading from the N-terminus, the 1358-residue chain is Mediator of RNA polymerase II transcription subunit 12 (1358 aa).

Residues 629 to 654 (VRYNYEQLQIQLNTAKEQMLQEQFEH) are a coiled coil.

The protein belongs to the Mediator complex subunit 12 family. In terms of assembly, component of the SRB8-11 complex, which itself associates with the Mediator complex.

It is found in the nucleus. In terms of biological role, component of the SRB8-11 complex. The SRB8-11 complex is a regulatory module of the Mediator complex which is itself involved in regulation of basal and activated RNA polymerase II-dependent transcription. The SRB8-11 complex may be involved in the transcriptional repression of a subset of genes regulated by Mediator. It may inhibit the association of the Mediator complex with RNA polymerase II to form the holoenzyme complex. The protein is Mediator of RNA polymerase II transcription subunit 12 (SRB8) of Eremothecium gossypii (strain ATCC 10895 / CBS 109.51 / FGSC 9923 / NRRL Y-1056) (Yeast).